Here is a 279-residue protein sequence, read N- to C-terminus: NAD kinase (279 aa).

D57 (proton acceptor) is an active-site residue. Residues 57–58 (DG), 133–134 (NE), R159, D161, and 172–177 (TAYNKS) contribute to the NAD(+) site.

Belongs to the NAD kinase family. A divalent metal cation serves as cofactor.

The protein localises to the cytoplasm. The catalysed reaction is NAD(+) + ATP = ADP + NADP(+) + H(+). Functionally, involved in the regulation of the intracellular balance of NAD and NADP, and is a key enzyme in the biosynthesis of NADP. Catalyzes specifically the phosphorylation on 2'-hydroxyl of the adenosine moiety of NAD to yield NADP. The chain is NAD kinase from Streptococcus pyogenes serotype M2 (strain MGAS10270).